Reading from the N-terminus, the 267-residue chain is RWD domain-containing protein 3 (267 aa).

One can recognise an RWD domain in the interval 7–114 (QELSALAAIF…LWTQQNLRHI (108 aa)). 2 interaction with UBE2I/UBC9 regions span residues 13 to 15 (AAI) and 100 to 102 (VHE).

As to quaternary structure, interacts with UBE2I/UBC9, NFKBIA, HIF1A and NCOA2.

The protein localises to the nucleus. It is found in the cytoplasm. Its function is as follows. Enhancer of SUMO conjugation. Via its interaction with UBE2I/UBC9, increases SUMO conjugation to proteins by promoting the binding of E1 and E2 enzymes, thioester linkage between SUMO and UBE2I/UBC9 and transfer of SUMO to specific target proteins which include HIF1A, PIAS, NFKBIA, NR3C1 and TOP1. Positively regulates the NF-kappa-B signaling pathway by enhancing the sumoylation of NF-kappa-B inhibitor alpha (NFKBIA), promoting its stabilization which consequently leads to an increased inhibition of NF-kappa-B transcriptional activity. Negatively regulates the hypoxia-inducible factor-1 alpha (HIF1A) signaling pathway by increasing the sumoylation of HIF1A, promoting its stabilization, transcriptional activity and the expression of its target gene VEGFA during hypoxia. Has no effect on ubiquitination. The protein is RWD domain-containing protein 3 (Rwdd3) of Rattus norvegicus (Rat).